A 284-amino-acid polypeptide reads, in one-letter code: Aliphatic sulfonates import ATP-binding protein SsuB (284 aa).

Residues 21 to 242 (LRIAHAVKRY…HRGAPAFARL (222 aa)) form the ABC transporter domain. 53 to 60 (GRSGCGKS) provides a ligand contact to ATP.

Belongs to the ABC transporter superfamily. Aliphatic sulfonates importer (TC 3.A.1.17.2) family. In terms of assembly, the complex is composed of two ATP-binding proteins (SsuB), two transmembrane proteins (SsuC) and a solute-binding protein (SsuA).

The protein localises to the cell inner membrane. The enzyme catalyses ATP + H2O + aliphatic sulfonate-[sulfonate-binding protein]Side 1 = ADP + phosphate + aliphatic sulfonateSide 2 + [sulfonate-binding protein]Side 1.. Its function is as follows. Part of the ABC transporter complex SsuABC involved in aliphatic sulfonates import. Responsible for energy coupling to the transport system. The sequence is that of Aliphatic sulfonates import ATP-binding protein SsuB from Ralstonia nicotianae (strain ATCC BAA-1114 / GMI1000) (Ralstonia solanacearum).